Consider the following 214-residue polypeptide: Adenylate kinase (214 aa).

An ATP-binding site is contributed by glycine 10–threonine 15. Residues serine 30–valine 59 form an NMP region. AMP contacts are provided by residues threonine 31, arginine 36, glutamine 57–valine 59, glycine 85–arginine 88, and glutamine 92. The segment at glycine 122–aspartate 159 is LID. Residues arginine 123 and threonine 132–tyrosine 133 contribute to the ATP site. AMP-binding residues include arginine 156 and arginine 167. Residue lysine 200 participates in ATP binding.

This sequence belongs to the adenylate kinase family. In terms of assembly, monomer.

Its subcellular location is the cytoplasm. The enzyme catalyses AMP + ATP = 2 ADP. Its pathway is purine metabolism; AMP biosynthesis via salvage pathway; AMP from ADP: step 1/1. In terms of biological role, catalyzes the reversible transfer of the terminal phosphate group between ATP and AMP. Plays an important role in cellular energy homeostasis and in adenine nucleotide metabolism. This is Adenylate kinase from Vibrio parahaemolyticus serotype O3:K6 (strain RIMD 2210633).